The chain runs to 1253 residues: Cytoplasmic FMR1-interacting protein 2 (1253 aa).

An N6-acetyllysine modification is found at lysine 1037.

This sequence belongs to the CYFIP family. In terms of assembly, component of the WAVE1 complex composed of ABI2, CYFIP2, BRK1, NCKAP1 and WASF1/WAVE1. Interacts with RAC1 (activated form) which causes the complex to dissociate, releasing activated WASF1. The complex can also be activated by NCK1. Interacts with SHANK3; the interaction mediates the association of SHANK3 with the WAVE1 complex. Interacts with FMR1; the interaction occurs in a RNA-dependent manner. Interacts with FXR1 and FXR2. Interacts with TMEM108 (via N-terminus); the interaction associates TMEM108 with the WAVE1 complex.

It localises to the cytoplasm. The protein resides in the nucleus. Its subcellular location is the perinuclear region. The protein localises to the synapse. It is found in the synaptosome. Involved in T-cell adhesion and p53-dependent induction of apoptosis. Does not bind RNA. As component of the WAVE1 complex, required for BDNF-NTRK2 endocytic trafficking and signaling from early endosomes. This is Cytoplasmic FMR1-interacting protein 2 from Pongo abelii (Sumatran orangutan).